The following is a 1409-amino-acid chain: Receptor-type tyrosine-protein phosphatase (1409 aa).

The signal sequence occupies residues 1-22 (MRINRWIWWATVILLYLRTGLA). The Extracellular portion of the chain corresponds to 23-712 (ADFFRSSEEN…LLDTESSSSG (690 aa)). The interval 32–53 (NDRKSSDDLDNFNSTKIEPDKP) is disordered. The region spanning 159 to 267 (PTKCDKRDLA…TASASDLDVT (109 aa)) is the Ig-like C2-type domain. C189 and C255 form a disulfide bridge. 2 consecutive Fibronectin type-III domains span residues 276–366 (APRQ…TKQK) and 372–502 (KEED…AQPD). Residues 713 to 733 (FGIFMKIILPFLLFLAFATGV) form a helical membrane-spanning segment. The Cytoplasmic portion of the chain corresponds to 734 to 1409 (TMFFVNRKGH…LADYISKTYR (676 aa)). Tyrosine-protein phosphatase domains follow at residues 793 to 1072 (FAQE…LAEW) and 1135 to 1403 (LEEE…LADY). Catalysis depends on phosphocysteine intermediate residues C1013 and C1344.

This sequence belongs to the protein-tyrosine phosphatase family. Receptor class 2A subfamily. In terms of tissue distribution, expressed in muscles, hypodermis and a subset of neurons. Expressed in the AVA neurons, with high expression in the anterior half of the preanal ganglion where AVA neurons contact the PHB neurons.

The protein resides in the cell membrane. It is found in the synapse. The catalysed reaction is O-phospho-L-tyrosyl-[protein] + H2O = L-tyrosyl-[protein] + phosphate. Possesses an intrinsic protein tyrosine phosphatase (PTPase) activity. Regulates egl-15 activity which is required for hypodermis-mediated fluid homeostasis and protein degradation in muscle. During the formation of neuromuscular junctions at the larval stage, negatively regulates membrane protrusion from body wall muscles. Plays a role in nicotinic acetylcholine receptor (nAChR)-mediated sensitivity to nicotine. Regulates synaptic levels of nAchR subunit lev-1 in the nerve cord. Promotes the outgrowth of the quaternary dendritic branches of the PVD sensory neurons. In parallel to the sax-7/mnr-1 pathway, also controls the extension of the PVD primary branches. Acts in the netrin/DCC pathway to mediate the formation of synapses between the AVA interneurons and the PHB sensory neurons. Also required for the formation of synapses between the AVA interneurons and the VA10 motor neurons. The sequence is that of Receptor-type tyrosine-protein phosphatase from Caenorhabditis elegans.